The sequence spans 470 residues: 3-isopropylmalate dehydratase large subunit (470 aa).

[4Fe-4S] cluster is bound by residues Cys349, Cys409, and Cys412.

The protein belongs to the aconitase/IPM isomerase family. LeuC type 1 subfamily. In terms of assembly, heterodimer of LeuC and LeuD. It depends on [4Fe-4S] cluster as a cofactor.

The enzyme catalyses (2R,3S)-3-isopropylmalate = (2S)-2-isopropylmalate. It participates in amino-acid biosynthesis; L-leucine biosynthesis; L-leucine from 3-methyl-2-oxobutanoate: step 2/4. Its function is as follows. Catalyzes the isomerization between 2-isopropylmalate and 3-isopropylmalate, via the formation of 2-isopropylmaleate. In Methylobacterium radiotolerans (strain ATCC 27329 / DSM 1819 / JCM 2831 / NBRC 15690 / NCIMB 10815 / 0-1), this protein is 3-isopropylmalate dehydratase large subunit.